A 159-amino-acid chain; its full sequence is Phosphopantetheine adenylyltransferase (159 aa).

H16 serves as a coordination point for ATP. Residues K40, M72, and R86 each contribute to the substrate site. ATP is bound by residues 87–89 (GLR), E97, and 122–128 (YQYLSAS).

The protein belongs to the bacterial CoaD family. In terms of assembly, homohexamer. Mg(2+) serves as cofactor.

It is found in the cytoplasm. It carries out the reaction (R)-4'-phosphopantetheine + ATP + H(+) = 3'-dephospho-CoA + diphosphate. It functions in the pathway cofactor biosynthesis; coenzyme A biosynthesis; CoA from (R)-pantothenate: step 4/5. Its function is as follows. Reversibly transfers an adenylyl group from ATP to 4'-phosphopantetheine, yielding dephospho-CoA (dPCoA) and pyrophosphate. The sequence is that of Phosphopantetheine adenylyltransferase from Dehalococcoides mccartyi (strain ATCC BAA-2100 / JCM 16839 / KCTC 5957 / BAV1).